The primary structure comprises 220 residues: Heptaprenyl diphosphate synthase component 1 (220 aa).

As to quaternary structure, heterodimer of component I and II.

It catalyses the reaction 4 isopentenyl diphosphate + (2E,6E)-farnesyl diphosphate = all-trans-heptaprenyl diphosphate + 4 diphosphate. Functionally, supplies heptaprenyl diphosphate, the precursor for the side chain of the isoprenoid quinone menaquinone-7 (MQ-7). The sequence is that of Heptaprenyl diphosphate synthase component 1 (hepS) from Geobacillus stearothermophilus (Bacillus stearothermophilus).